The sequence spans 199 residues: Recombination protein RecR (199 aa).

The segment at 56–71 adopts a C4-type zinc-finger fold; sequence CAICGNVAEHEQCRIC. The region spanning 79–174 is the Toprim domain; it reads TVLCVVEEPK…RVTRLASGLP (96 aa).

It belongs to the RecR family.

In terms of biological role, may play a role in DNA repair. It seems to be involved in an RecBC-independent recombinational process of DNA repair. It may act with RecF and RecO. This Acidothermus cellulolyticus (strain ATCC 43068 / DSM 8971 / 11B) protein is Recombination protein RecR.